Reading from the N-terminus, the 353-residue chain is MTAILERRESESLWGRFCNWITSTENRLYIGWFGVLMIPTLLTATSVFIIAFIAAPPVDIDGIREPVSGSLLYGNNIISGAIIPTSAAIGLHFYPIWEAASVDEWLYNGGPYELIVLHFLLGVACYMGREWELSFRLGMRPWIAVAYSAPVAAATAVFLIYPIGQGSFSDGMPLGISGTFNFMIVFQAEHNILMHPFHMLGVAGVFGGSLFSAMHGSLVTSSLIRETTENESANEGYRFGQEEETYNIVAAHGYFGRLIFQYASFNNSRSLHFFLAAWPVIGIWFTALGISTMAFNLNGFNFNQSVVDSQGRVINTWADIINRANLGMEVMHERNAHNFPLDLAAIEAPSTNG.

Residue Thr-2 is modified to N-acetylthreonine. Phosphothreonine is present on Thr-2. The next 3 membrane-spanning stretches (helical) occupy residues 29–46 (YIGW…TATS), 118–133 (HFLL…EWEL), and 142–156 (WIAV…AATA). His-118 contacts chlorophyll a. Tyr-126 is a pheophytin a binding site. The [CaMn4O5] cluster site is built by Asp-170 and Glu-189. The chain crosses the membrane as a helical span at residues 197 to 218 (FHMLGVAGVFGGSLFSAMHGSL). His-198 contacts chlorophyll a. A quinone contacts are provided by residues His-215 and 264-265 (SF). His-215 contacts Fe cation. Residue His-272 participates in Fe cation binding. Residues 274–288 (FLAAWPVIGIWFTAL) traverse the membrane as a helical segment. [CaMn4O5] cluster is bound by residues His-332, Glu-333, Asp-342, and Ala-344. A propeptide spanning residues 345–353 (AIEAPSTNG) is cleaved from the precursor.

Belongs to the reaction center PufL/M/PsbA/D family. As to quaternary structure, PSII is composed of 1 copy each of membrane proteins PsbA, PsbB, PsbC, PsbD, PsbE, PsbF, PsbH, PsbI, PsbJ, PsbK, PsbL, PsbM, PsbT, PsbX, PsbY, PsbZ, Psb30/Ycf12, at least 3 peripheral proteins of the oxygen-evolving complex and a large number of cofactors. It forms dimeric complexes. The D1/D2 heterodimer binds P680, chlorophylls that are the primary electron donor of PSII, and subsequent electron acceptors. It shares a non-heme iron and each subunit binds pheophytin, quinone, additional chlorophylls, carotenoids and lipids. D1 provides most of the ligands for the Mn4-Ca-O5 cluster of the oxygen-evolving complex (OEC). There is also a Cl(-1) ion associated with D1 and D2, which is required for oxygen evolution. The PSII complex binds additional chlorophylls, carotenoids and specific lipids. serves as cofactor. Post-translationally, tyr-161 forms a radical intermediate that is referred to as redox-active TyrZ, YZ or Y-Z. C-terminally processed by CTPA; processing is essential to allow assembly of the oxygen-evolving complex and thus photosynthetic growth.

The protein resides in the plastid. It localises to the chloroplast thylakoid membrane. The enzyme catalyses 2 a plastoquinone + 4 hnu + 2 H2O = 2 a plastoquinol + O2. Its function is as follows. Photosystem II (PSII) is a light-driven water:plastoquinone oxidoreductase that uses light energy to abstract electrons from H(2)O, generating O(2) and a proton gradient subsequently used for ATP formation. It consists of a core antenna complex that captures photons, and an electron transfer chain that converts photonic excitation into a charge separation. The D1/D2 (PsbA/PsbD) reaction center heterodimer binds P680, the primary electron donor of PSII as well as several subsequent electron acceptors. In Amaranthus hybridus (Slim amaranth), this protein is Photosystem II protein D1.